An 813-amino-acid chain; its full sequence is DNA ligase (813 aa).

Residues 41–45 (DAEYD), 90–91 (SI), and Glu127 contribute to the NAD(+) site. The N6-AMP-lysine intermediate role is filled by Lys129. Arg150, Glu189, Lys307, and Lys331 together coordinate NAD(+). Positions 440, 443, 458, and 464 each coordinate Zn(2+). Residues 729–813 (AEEGALSGKT…LLQNPPGDSA (85 aa)) enclose the BRCT domain.

This sequence belongs to the NAD-dependent DNA ligase family. LigA subfamily. Mg(2+) serves as cofactor. Mn(2+) is required as a cofactor.

The catalysed reaction is NAD(+) + (deoxyribonucleotide)n-3'-hydroxyl + 5'-phospho-(deoxyribonucleotide)m = (deoxyribonucleotide)n+m + AMP + beta-nicotinamide D-nucleotide.. In terms of biological role, DNA ligase that catalyzes the formation of phosphodiester linkages between 5'-phosphoryl and 3'-hydroxyl groups in double-stranded DNA using NAD as a coenzyme and as the energy source for the reaction. It is essential for DNA replication and repair of damaged DNA. This Ralstonia nicotianae (strain ATCC BAA-1114 / GMI1000) (Ralstonia solanacearum) protein is DNA ligase.